The following is a 286-amino-acid chain: Release factor glutamine methyltransferase (286 aa).

Positions 136 and 179 each coordinate S-adenosyl-L-methionine. 179–182 contributes to the substrate binding site; that stretch reads NPPY.

This sequence belongs to the protein N5-glutamine methyltransferase family. PrmC subfamily.

The enzyme catalyses L-glutaminyl-[peptide chain release factor] + S-adenosyl-L-methionine = N(5)-methyl-L-glutaminyl-[peptide chain release factor] + S-adenosyl-L-homocysteine + H(+). Functionally, methylates the class 1 translation termination release factors RF1/PrfA and RF2/PrfB on the glutamine residue of the universally conserved GGQ motif. The polypeptide is Release factor glutamine methyltransferase (Borreliella burgdorferi (strain ATCC 35210 / DSM 4680 / CIP 102532 / B31) (Borrelia burgdorferi)).